Here is a 375-residue protein sequence, read N- to C-terminus: Peptidyl-prolyl cis-trans isomerase D (375 aa).

The 163-residue stretch at 7-169 folds into the PPIase cyclophilin-type domain; that stretch reads YFDITIANEP…QEVTISSAGV (163 aa). TPR repeat units follow at residues 217 to 250, 270 to 307, and 312 to 345; these read AGKL…LDVH, LPLL…PNLS, and GKAL…VPGD.

Belongs to the cyclophilin-type PPIase family. PPIase D subfamily.

The protein resides in the cytoplasm. It catalyses the reaction [protein]-peptidylproline (omega=180) = [protein]-peptidylproline (omega=0). In terms of biological role, PPIases accelerate the folding of proteins. It catalyzes the cis-trans isomerization of proline imidic peptide bonds in oligopeptides. The sequence is that of Peptidyl-prolyl cis-trans isomerase D (CPR6) from Cryptococcus neoformans var. neoformans serotype D (strain B-3501A) (Filobasidiella neoformans).